The chain runs to 334 residues: Anthranilate phosphoribosyltransferase (334 aa).

5-phospho-alpha-D-ribose 1-diphosphate is bound by residues Gly-79, 82-83 (GD), Ser-87, 89-92 (NIST), 107-115 (KAGNRSISS), and Ser-119. Gly-79 serves as a coordination point for anthranilate. Residue Ser-91 participates in Mg(2+) binding. Asn-110 is a binding site for anthranilate. Arg-165 serves as a coordination point for anthranilate. Mg(2+)-binding residues include Asp-224 and Glu-225.

The protein belongs to the anthranilate phosphoribosyltransferase family. Homodimer. Mg(2+) serves as cofactor.

It catalyses the reaction N-(5-phospho-beta-D-ribosyl)anthranilate + diphosphate = 5-phospho-alpha-D-ribose 1-diphosphate + anthranilate. It functions in the pathway amino-acid biosynthesis; L-tryptophan biosynthesis; L-tryptophan from chorismate: step 2/5. Functionally, catalyzes the transfer of the phosphoribosyl group of 5-phosphorylribose-1-pyrophosphate (PRPP) to anthranilate to yield N-(5'-phosphoribosyl)-anthranilate (PRA). In Streptococcus thermophilus (strain CNRZ 1066), this protein is Anthranilate phosphoribosyltransferase.